The following is a 269-amino-acid chain: Thymidylate synthase (269 aa).

Arg-26 provides a ligand contact to dUMP. Residue His-56 coordinates (6R)-5,10-methylene-5,6,7,8-tetrahydrofolate. 131-132 (RR) contributes to the dUMP binding site. Cys-151 functions as the Nucleophile in the catalytic mechanism. Residues 171-174 (RSAD), Asn-182, and 212-214 (HIY) contribute to the dUMP site. (6R)-5,10-methylene-5,6,7,8-tetrahydrofolate is bound at residue Asp-174. Ala-268 contacts (6R)-5,10-methylene-5,6,7,8-tetrahydrofolate.

The protein belongs to the thymidylate synthase family. Bacterial-type ThyA subfamily. As to quaternary structure, homodimer.

It localises to the cytoplasm. The enzyme catalyses dUMP + (6R)-5,10-methylene-5,6,7,8-tetrahydrofolate = 7,8-dihydrofolate + dTMP. It participates in pyrimidine metabolism; dTTP biosynthesis. Functionally, catalyzes the reductive methylation of 2'-deoxyuridine-5'-monophosphate (dUMP) to 2'-deoxythymidine-5'-monophosphate (dTMP) while utilizing 5,10-methylenetetrahydrofolate (mTHF) as the methyl donor and reductant in the reaction, yielding dihydrofolate (DHF) as a by-product. This enzymatic reaction provides an intracellular de novo source of dTMP, an essential precursor for DNA biosynthesis. The chain is Thymidylate synthase from Leifsonia xyli subsp. xyli (strain CTCB07).